The sequence spans 704 residues: SH3KBP1-binding protein 1 (704 aa).

Ala2 is subject to N-acetylalanine. Residues 19-88 (EVIHLNVGGK…LRTKELDPRG (70 aa)) form the BTB domain. Positions 145-165 (LVGPQQAGGRPAPVRRSNTMP) are disordered. Residue Thr163 is modified to Phosphothreonine. WD repeat units follow at residues 233–280 (RLDW…GGSE), 283–322 (VFHL…WQVQ), 324–359 (VQPI…LRMK), 428–466 (VHRS…GMIS), and 548–586 (LECE…DGLG). Positions 611-644 (ASSRGSLPSPSPRTSLTSLHSAFSNTSLSSRRGS) are enriched in low complexity. Positions 611 to 704 (ASSRGSLPSP…PKTKLNETSF (94 aa)) are disordered. The short motif at 618 to 623 (PSPSPR) is the PXXXPR element. 2 positions are modified to phosphoserine: Ser644 and Ser646. The PXXXPR motif lies at 678 to 683 (PTPAPR).

This sequence belongs to the KCTD3 family. As to quaternary structure, monomer. Interacts with CUL3; interaction is direct and forms a 5:5 heterodecamer. Interacts (via PXXXPR motifs) with SH3KBP1 (via SH3 domains). Directly interacts with cathepsin B/CTSB.

The protein localises to the lysosome. Inhibits CBL-SH3KBP1 complex mediated down-regulation of EGFR signaling by sequestration of SH3KBP1. Binds to SH3KBP1 and prevents its interaction with CBL and inhibits translocation of SH3KBP1 to EGFR containing vesicles upon EGF stimulation. The protein is SH3KBP1-binding protein 1 (SHKBP1) of Bos taurus (Bovine).